The primary structure comprises 357 residues: Probable butyrate kinase 1 (357 aa).

The protein belongs to the acetokinase family.

The protein localises to the cytoplasm. The catalysed reaction is butanoate + ATP = butanoyl phosphate + ADP. The protein is Probable butyrate kinase 1 of Thermotoga maritima (strain ATCC 43589 / DSM 3109 / JCM 10099 / NBRC 100826 / MSB8).